A 319-amino-acid polypeptide reads, in one-letter code: MGFNINIIGTGGTRPLHNRYLSSVLIEYDGDNFLFDCGEGTQMSLRKQKISWQKIKMICITHLHADHITGLLGIVMLMSQSGETRKEPLIIAGPVGIKNYTQANINMLKIYKNYEIIYKEIIIDKTEKIIYEDKTKKIEYTKLKHSIECVGYLFIEKDKPGKFNTEKAEELNIPKGPIRKALQDGKEILVNGKIIKPSEILGKSKKGLKVAYITDTGYFKELIQQIKNFNLVIIESTFKNELKKEADKKLHLTAGGAANIVKQAKVLQTGLIHFSERYTLRKDLENLLKEAKLEHPDGEIFLTRDGMRLEANKNNFIIK.

Zn(2+) is bound by residues His62, His64, Asp66, His67, His145, Asp215, and His273. Asp66 acts as the Proton acceptor in catalysis.

Belongs to the RNase Z family. In terms of assembly, homodimer. Requires Zn(2+) as cofactor.

It catalyses the reaction Endonucleolytic cleavage of RNA, removing extra 3' nucleotides from tRNA precursor, generating 3' termini of tRNAs. A 3'-hydroxy group is left at the tRNA terminus and a 5'-phosphoryl group is left at the trailer molecule.. Zinc phosphodiesterase, which displays some tRNA 3'-processing endonuclease activity. Probably involved in tRNA maturation, by removing a 3'-trailer from precursor tRNA. In Borreliella burgdorferi (strain ATCC 35210 / DSM 4680 / CIP 102532 / B31) (Borrelia burgdorferi), this protein is Ribonuclease Z.